The primary structure comprises 658 residues: UvrABC system protein B (658 aa).

In terms of domain architecture, Helicase ATP-binding spans 25-178; that stretch reads KSLKNNNHYQ…KNFLLKLVEM (154 aa). Residue 38 to 45 participates in ATP binding; the sequence is GVTGSGKT. Residues 91-114 carry the Beta-hairpin motif; the sequence is HFDYYQPESYIPRRDLFIEKDSSI. In terms of domain architecture, Helicase C-terminal spans 433–607; it reads QVQDLFDEIK…ELKLRDDEIR (175 aa). The 36-residue stretch at 623–658 folds into the UVR domain; it reads EKIIKELDKKMRECAKNLDFEEAMRLRDEIAKLRTL.

The protein belongs to the UvrB family. As to quaternary structure, forms a heterotetramer with UvrA during the search for lesions. Interacts with UvrC in an incision complex.

It is found in the cytoplasm. The UvrABC repair system catalyzes the recognition and processing of DNA lesions. A damage recognition complex composed of 2 UvrA and 2 UvrB subunits scans DNA for abnormalities. Upon binding of the UvrA(2)B(2) complex to a putative damaged site, the DNA wraps around one UvrB monomer. DNA wrap is dependent on ATP binding by UvrB and probably causes local melting of the DNA helix, facilitating insertion of UvrB beta-hairpin between the DNA strands. Then UvrB probes one DNA strand for the presence of a lesion. If a lesion is found the UvrA subunits dissociate and the UvrB-DNA preincision complex is formed. This complex is subsequently bound by UvrC and the second UvrB is released. If no lesion is found, the DNA wraps around the other UvrB subunit that will check the other stand for damage. In Helicobacter pylori (strain HPAG1), this protein is UvrABC system protein B.